The primary structure comprises 462 residues: Ketoisovalerate reductase (462 aa).

A disordered region spans residues 34–55 (PTAVKPDRADRGDFDPGKYPVD). Residues 38–49 (KPDRADRGDFDP) show a composition bias toward basic and acidic residues. 72–77 (GPGNVG) is an NADP(+) binding site. A Calmoduling-binding motif is present at residues 167 to 184 (ADRLRRYLGRCSSVVFAQ). Residue Lys-290 is the Proton donor of the active site. Substrate contacts are provided by Asn-294, Asn-298, and Ser-403. Glu-415 serves as a coordination point for NADP(+).

The protein belongs to the ketopantoate reductase family. In terms of assembly, homodimer. Binds to calmodulin in a calcium-independent manner.

The enzyme catalyses (R)-2-hydroxy-3-methylbutanoate + NADP(+) = 3-methyl-2-oxobutanoate + NADPH + H(+). Its activity is regulated as follows. Environmental stimuli such as light and salt stress suppress activity through stimulation of calmodulin (CaM) that binds BEA2 and probably impairs its dimerization. Its function is as follows. Ketoisovalerate reductase; part of the gene cluster that mediates the biosynthesis of beauvericin (BEA), a non-ribosomal cyclic hexadepsipeptide that shows antibiotic, antifungal, insecticidal, and cancer cell antiproliferative and antihaptotactic activity. Ketoisovalerate reductase BEA2 catalyzes the NADPH-specific reduction of ketoisovaleric acid to hydroxyisovalerate, a precursor for beauvericin biosynthesis. The nonribosomal cyclodepsipeptide synthetase BEA1 then catalyzes the formation of beauvericin via condensation and cyclization of 3 dipeptidol monomers, each composed of one unit of hydroxyisovalerate and one unit of N-methyl-phenylalanine. The sequence is that of Ketoisovalerate reductase from Beauveria bassiana (White muscardine disease fungus).